The chain runs to 7078 residues: Replicase polyprotein 1ab (7078 aa).

One can recognise a CoV Nsp1 globular domain in the interval 25 to 149 (HQDHVSLTVP…KQNILLRKYG (125 aa)). The BetaCoV Nsp1 C-terminal domain occupies 165-193 (TSCPEWMDDFEADPKGKYAQNLLKKLIGG). The 281-residue stretch at 195–475 (VTPVDQYMCG…WNKVTQIANM (281 aa)) folds into the CoV Nsp2 N-terminal domain. Zn(2+)-binding residues include C338, C341, C357, C359, C383, C386, H400, and C436. Residues 338–359 (CGSCGNDSWLTGNAIQGFACGC) are C4. Residues 383-436 (CATCPFAKGDSCSSNCKHSVAQLVSYLSERCNVIADSKSFTLIFGGVAYAYFGC) form a C2HC region. The CoV Nsp2 middle domain maps to 481-715 (QHSLNFVGEF…LDLLNKGMQL (235 aa)). The 137-residue stretch at 717–853 (HTKVSWAGSN…VPTLFRLKGG (137 aa)) folds into the CoV Nsp2 C-terminal domain. In terms of domain architecture, Ubiquitin-like 1 spans 857 to 966 (KKVAFGGDQV…MIFSLHPVEC (110 aa)). Macro domains are found at residues 1110 to 1276 (PLSN…IVDI) and 1278 to 1404 (QSLT…VKLN). The DPUP domain maps to 1404–1477 (NPSEDFIKHV…LSACRAYLDS (74 aa)). One can recognise a Ubiquitin-like 2 domain in the interval 1482-1537 (QLTIEVLVTVDGVNFRTVVLNNKNTYRSQLGCVFFNGADISDTIPDEKQNGHSLYL). The region spanning 1552–1823 (LYGPVDPTFL…RTEVDPDLSA (272 aa)) is the Peptidase C16 domain. Residue C1592 is the For PL-PRO activity of the active site. Zn(2+)-binding residues include C1672, C1675, C1707, and C1709. Residues 1672–1709 (CNVCGIKDVVLQGLKACCYVGVQTVEDLRARMTYVCQC) form a C4-type zinc finger. Active-site for PL-PRO activity residues include H1759 and D1774. The Nucleic acid-binding domain maps to 1837 to 1954 (PVTYSPATIL…QIFDVAPIEL (118 aa)). Residues 1967-2088 (PVEPPTVDVV…ATRTFTATTA (122 aa)) form the G2M domain. Residues 2040 to 2363 (SMLRLHTVES…NLLACLWLLR (324 aa)) form an HD1 region. Transmembrane regions (helical) follow at residues 2105-2125 (GILTGCFSFVKMLFMLPLAYF) and 2177-2197 (LLLMLCTTMVLLSSVYHLYVF). The 67-residue stretch at 2214–2280 (KKFYKEVRAY…LKMVQTHLSH (67 aa)) folds into the 3Ecto domain. 2 disulfide bridges follow: C2230–C2258 and C2248–C2255. Helical transmembrane passes span 2281–2301 (YVLNIDWLWFAFETGLAYMLY), 2305–2325 (FNWLLLAGTLHYFFAQTSIFV), and 2330–2350 (YNYAVSSAFWLFTHIPMAGLV). The interval 2364 to 2454 (KFYQHVINGC…ALRRPINATD (91 aa)) is Y1. The region spanning 2364-2737 (KFYQHVINGC…LSVRFTANKI (374 aa)) is the CoV Nsp3 Y domain. The Zn(2+) site is built by H2368, C2373, C2378, C2381, C2414, H2417, C2421, and C2424. The ZF1 stretch occupies residues 2368-2381 (HVINGCKDTACLLC). The segment at 2414–2424 (CRRHNWNCVDC) is ZF2. The interval 2455–2553 (RSHYYVDSVT…LVDSSLVTSV (99 aa)) is Y2. The interval 2455-2737 (RSHYYVDSVT…LSVRFTANKI (283 aa)) is coV-Y. The Y3 stretch occupies residues 2554–2636 (GDSSEIATKM…DSVQYAHKHD (83 aa)). The interval 2637–2737 (IQITNESYNN…LSVRFTANKI (101 aa)) is Y4. A run of 5 helical transmembrane segments spans residues 2757–2777 (VLATIIVFLCAVLMYLCLPTF), 3028–3048 (TTSLVLGIGLCAFLTLLFYYI), 3062–3082 (AVIAVVAAVLNSLCICFVASI), 3104–3124 (PAFIMHVSWYIMFGPIVPIWM), and 3125–3145 (TCVYTVAMCFRHFFWVLAYFS). The segment at 2761–3171 (IIVFLCAVLM…QDAASNIFVI (411 aa)) is HD2. The Nsp4C domain maps to 3151–3247 (VFTDGKLNCS…NCSITSGVLQ (97 aa)). In terms of domain architecture, Peptidase C30 spans 3248-3553 (SGLVKMSHPS…NMQIMGVVMQ (306 aa)). Catalysis depends on for 3CL-PRO activity residues H3288 and C3395. The next 7 helical transmembrane spans lie at 3559–3579 (VTYGTAHWLFATLVSTYVIIL), 3593–3613 (TIPTQLFPLLFVTMAFVMLLV), 3618–3638 (TFLTLFLLPVAICLTYANIVY), 3664–3684 (TTHTDIGVYISMSLVLVIVVK), 3691–3711 (LSNFALALCSGVMWLYTYSIG), 3740–3760 (LAKVCTYAIFAYSPQLTLVFP), and 3765–3785 (ILLLYTCLGFMCTCYFGVFSL). The segment at 3571-3785 (LVSTYVIILQ…CTCYFGVFSL (215 aa)) is HD3. The RdRp Nsp7 cofactor domain occupies 3846 to 3928 (SKLTDLKCTS…DIFDTPSVLQ (83 aa)). In terms of domain architecture, RdRp Nsp8 cofactor spans 3929-4127 (ATLSEFSHLA…RASTSAVKLQ (199 aa)). The Nsp9 ssRNA-binding domain maps to 4128–4237 (NNEIKPSGLK…GHIAATVRLQ (110 aa)). In terms of domain architecture, ExoN/MTase coactivator spans 4238-4377 (AGSNTEFASN…DSLRQAALPQ (140 aa)). Residues C4311, C4314, H4320, C4327, C4354, C4357, C4365, and C4367 each contribute to the Zn(2+) site. Zinc fingers lie at residues 4311 to 4327 (CLYCRAHIEHPDVSGVC) and 4354 to 4367 (CNVCQYWIGYGCNC). Residues 4383-4639 (FLKRVRGSIV…AAETHRDCDF (257 aa)) form the NiRAN domain. Residues N4587 and D4596 each coordinate Mn(2+). The Nsp12 Interface domain maps to 4644 to 4742 (IEWPLTEYDF…MNMDVSLHRH (99 aa)). The Zn(2+) site is built by H4673, C4679, C4684, C4688, and C4865. Residues 4743–5310 (RLSLKELMMY…DLYSSPTTLQ (568 aa)) form the Nsp12 RNA-dependent RNA polymerase domain. Positions 4745-4959 (SLKELMMYAA…HQKMLKSMAA (215 aa)) are rdRp Fingers N-ter. Positions 4960-4998 (TRGATCVIGTTKFYGGWDFMLKTLYKDVDNPHLMGWDYP) are rdRp Palm N-ter. The 163-residue stretch at 4990-5152 (PHLMGWDYPK…CYNSDYAAKG (163 aa)) folds into the RdRp catalytic domain. The interval 4999 to 5057 (KCDRAMPNMCRIFASLILARKHGTCCTTRDRFYRLANECAQVLSEYVLCGGGYYVKPGG) is rdRp Fingers C-ter. Residues H5020, C5023, and C5024 each coordinate Zn(2+). The rdRp Palm C-ter stretch occupies residues 5058–5193 (TSSGDATTAY…KKGPHEFCSQ (136 aa)). Catalysis depends on residues S5137, D5138, and D5139. Positions 5194–5310 (HTLYIKDGDD…DLYSSPTTLQ (117 aa)) are rdRp Thumb. The CV ZBD domain maps to 5311–5423 (AVGSCVVCHS…VEFNRLATCD (113 aa)). C5315, C5318, C5326, C5329, C5336, C5339, H5343, H5349, C5360, C5365, C5382, and H5385 together coordinate Zn(2+). Position 5592–5599 (5592–5599 (GPPGTGKS)) interacts with ATP. Residues 5980–6195 (LFITREEAVR…RCLAIHSCFI (216 aa)) form the ExoN domain. Catalysis depends on residues D5998, E6000, and E6099. Zn(2+) is bound by residues C6115, C6118, C6134, H6137, H6165, C6169, and H6172. Catalysis depends on residues H6176 and D6181. C6187 lines the Zn(2+) pocket. Residues 6204–6432 (YPYISHEKKL…NLWSTFTKVQ (229 aa)) form the N7-MTase domain. 6239 to 6245 (DIGNPKG) is a binding site for S-adenosyl-L-methionine. Residues 6318–6332 (CDGGSLYVNKHAFHT) are gpppA-binding. Residues C6356, C6378, C6389, and H6392 each contribute to the Zn(2+) site. One can recognise a Nsp15 N-terminal oligomerization domain in the interval 6433 to 6493 (GLENIAFNFV…NIAFELYAKR (61 aa)). An AV-Nsp11N/CoV-Nsp15M domain is found at 6494–6616 (AVRSHPDFKL…LYKKVNNEFI (123 aa)). The NendoU domain maps to 6633–6772 (LPLSDMEKDF…KDGQVQTFYP (140 aa)). Catalysis depends on residues H6663, H6678, K6718, K6821, D6905, K6945, and E6978. In terms of domain architecture, Nidovirus-type SAM-dependent 2'-O-MTase spans 6777–7071 (SADWKPGHAM…TLSVSTDVLV (295 aa)).

This sequence belongs to the coronaviruses polyprotein 1ab family. Interacts with host PHB and PHB2. As to quaternary structure, interacts with papain-like protease nsp3 and non-structural protein 6. In terms of assembly, monomer. Homodimer. Only the homodimer shows catalytic activity. Interacts with nsp8 and nsp12 to form the replication-transcription complex (RTC): nsp12, nsp7, two subunits of nsp8, and up to two subunits of nsp13. As to quaternary structure, interacts with nsp7, nsp13 and nsp12 to form the replication-transcription complex (RTC): nsp12, nsp7, two subunits of nsp8, and up to two subunits of nsp13. In terms of assembly, interacts with nsp12. Interacts with proofreading exoribonuclease nsp14 and 2'-O-methyltransferase nsp16; these interactions enhance nsp14 and nsp16 enzymatic activities. As to quaternary structure, interacts with nsp7 and nsp8 to form the replication-transcription complex (RTC): nsp12, nsp7, two subunits of nsp8, and up to two subunits of nsp13. Interacts with nsp9. In terms of assembly, interacts with nsp8 to form the replication-transcription complex (RTC): nsp12, nsp7, two subunits of nsp8, and up to two subunits of nsp13. The cofactor is Mn(2+). It depends on Mg(2+) as a cofactor. In terms of processing, specific enzymatic cleavages in vivo by its own proteases yield mature proteins. 3CL-PRO and PL-PRO proteinases are autocatalytically processed.

Its subcellular location is the host membrane. It localises to the host cytoplasm. The protein localises to the host perinuclear region. It is found in the host endoplasmic reticulum-Golgi intermediate compartment. The enzyme catalyses RNA(n) + a ribonucleoside 5'-triphosphate = RNA(n+1) + diphosphate. It carries out the reaction ATP + H2O = ADP + phosphate + H(+). The catalysed reaction is Thiol-dependent hydrolysis of ester, thioester, amide, peptide and isopeptide bonds formed by the C-terminal Gly of ubiquitin (a 76-residue protein attached to proteins as an intracellular targeting signal).. It catalyses the reaction a 5'-end (N(7)-methyl 5'-triphosphoguanosine)-ribonucleoside in mRNA + S-adenosyl-L-methionine = a 5'-end (N(7)-methyl 5'-triphosphoguanosine)-(2'-O-methyl-ribonucleoside) in mRNA + S-adenosyl-L-homocysteine + H(+). The enzyme catalyses uridylyl-uridylyl-ribonucleotide-RNA = a 3'-end uridylyl-2',3'-cyclophospho-uridine-RNA + a 5'-end dephospho-ribonucleoside-RNA. It carries out the reaction a 5'-end diphospho-ribonucleoside in mRNA + GTP + H(+) = a 5'-end (5'-triphosphoguanosine)-ribonucleoside in mRNA + diphosphate. The catalysed reaction is a 5'-end (5'-triphosphoguanosine)-ribonucleoside in mRNA + S-adenosyl-L-methionine = a 5'-end (N(7)-methyl 5'-triphosphoguanosine)-ribonucleoside in mRNA + S-adenosyl-L-homocysteine. In terms of biological role, the replicase polyprotein of coronaviruses is a multifunctional protein: it contains the activities necessary for the transcription of negative stranded RNA, leader RNA, subgenomic mRNAs and progeny virion RNA as well as proteinases responsible for the cleavage of the polyprotein into functional products. Its function is as follows. Promotes the degradation of host mRNAs by inducing an endonucleolytic RNA cleavage in template mRNAs, and inhibits of host mRNA translation, a function that is separable from its RNA cleavage activity. By suppressing host gene expression, nsp1 facilitates efficient viral gene expression in infected cells and evasion from host immune response. May play a role in the modulation of host cell survival signaling pathway by interacting with host PHB and PHB2. Indeed, these two proteins play a role in maintaining the functional integrity of the mitochondria and protecting cells from various stresses. Functionally, responsible for the cleavages located at the N-terminus of the replicase polyprotein. In addition, PL-PRO possesses a deubiquitinating/deISGylating activity and processes both 'Lys-48'- and 'Lys-63'-linked polyubiquitin chains from cellular substrates. Participates, together with nsp4, in the assembly of virally induced cytoplasmic double-membrane vesicles necessary for viral replication. Antagonizes innate immune induction of type I interferon by blocking the phosphorylation, dimerization and subsequent nuclear translocation of host IRF3. Also prevents host NF-kappa-B. signaling. In terms of biological role, participates in the assembly of virally-induced cytoplasmic double-membrane vesicles necessary for viral replication. Its function is as follows. Cleaves the C-terminus of replicase polyprotein at 11 sites. Recognizes substrates containing the core sequence [ILMVF]-Q-|-[SGACN]. May cleave human NLRP1 in lung epithelial cells, thereby activating the NLRP1 inflammasome pathway. Also able to bind an ADP-ribose-1''-phosphate (ADRP). Plays a role in the initial induction of autophagosomes from host endoplasmic reticulum. Later, limits the expansion of these phagosomes that are no longer able to deliver viral components to lysosomes. Functionally, forms a hexadecamer with nsp8 (8 subunits of each) that may participate in viral replication by acting as a primase. Alternatively, may synthesize substantially longer products than oligonucleotide primers. In terms of biological role, forms a hexadecamer with nsp7 (8 subunits of each) that may participate in viral replication by acting as a primase. Alternatively, may synthesize substantially longer products than oligonucleotide primers. Its function is as follows. Forms a primer, NSP9-pU, which is utilized by the polymerase for the initiation of RNA chains. Interacts with ribosome signal recognition particle RNA (SRP). Together with NSP8, suppress protein integration into the cell membrane, thereby disrupting host immune defenses. Plays a pivotal role in viral transcription by stimulating both nsp14 3'-5' exoribonuclease and nsp16 2'-O-methyltransferase activities. Therefore plays an essential role in viral mRNAs cap methylation. Functionally, RNA-directed RNA polymerase that catalyzes the transcription of viral genomic and subgenomic RNAs. Acts in complex with nsp7 and nsp8 to transcribe both the minus and positive strands of genomic RNA. The kinase-like NiRAN domain of NSP12 attaches one or more nucleotides to the amino terminus of NSP9, forming a covalent RNA-protein intermediate that serves as transcription/replication primer. Subgenomic RNAs (sgRNAs) are formed by discontinuous transcription: The polymerase has the ability to pause at transcription-regulating sequences (TRS) and jump to the leader TRS, resulting in a major deletion. This creates a series of subgenomic RNAs that are replicated, transcribed and translated. In addition, Nsp12 is a subunit of the viral RNA capping enzyme that catalyzes the RNA guanylyltransferase reaction for genomic and sub-genomic RNAs. Subsequently, the NiRAN domain transfers RNA to GDP, and forms the core cap structure GpppA-RNA. In terms of biological role, multi-functional protein with a zinc-binding domain in N-terminus displaying RNA and DNA duplex-unwinding activities with 5' to 3' polarity. Activity of helicase is dependent on magnesium. Its function is as follows. Plays a role in viral RNA synthesis through two distinct activities: an N7-guanine methyltransferase activity involved in the formation of the cap structure GpppA-RNA; a proofreading exoribonuclease for RNA replication that reduces the sensitivity of the virus to RNA mutagens. This activity acts on both ssRNA and dsRNA in a 3'-5' direction. Plays a role in viral transcription/replication and prevents the simultaneous activation of host cell dsRNA sensors, such as MDA5/IFIH1, OAS, and PKR. Acts by degrading the 5'-polyuridines generated during replication of the poly(A) region of viral genomic and subgenomic RNAs. Catalyzes a two-step reaction in which a 2'3'-cyclic phosphate (2'3'-cP) is first generated by 2'-O transesterification, which is then hydrolyzed to a 3'-phosphate (3'-P). If not degraded, poly(U) RNA would hybridize with poly(A) RNA tails and activate host dsRNA sensors. Functionally, methyltransferase that mediates mRNA cap 2'-O-ribose methylation to the 5'-cap structure of viral mRNAs. N7-methyl guanosine cap is a prerequisite for binding of nsp16. Therefore plays an essential role in viral mRNAs cap methylation which is essential to evade immune system. The protein is Replicase polyprotein 1ab (rep) of Camelus dromedarius (Dromedary).